A 434-amino-acid polypeptide reads, in one-letter code: Septin-6 (434 aa).

An N-acetylalanine modification is found at Ala2. A Phosphoserine modification is found at Ser27. Residues 39 to 305 (QGFCFNILCV…ELYRRCKLEE (267 aa)) form the Septin-type G domain. A G1 motif region spans residues 49-56 (GETGLGKS). Residues 49–56 (GETGLGKS), Gly104, 185–193 (KSDAISKSE), Gly239, and Arg254 contribute to the GTP site. The G3 motif stretch occupies residues 101-104 (STVG). A G4 motif region spans residues 184-187 (AKSD). The stretch at 321 to 407 (QETYEAKRNE…QRKAAAELLQ (87 aa)) forms a coiled coil. At Lys367 the chain carries N6-acetyllysine. A disordered region spans residues 403-434 (AELLQSQGSQAGGSQTLKRDKEKKNNPWLCIE). The span at 407-417 (QSQGSQAGGSQ) shows a compositional bias: low complexity. Phosphoserine is present on Ser416. A Phosphothreonine modification is found at Thr418.

It belongs to the TRAFAC class TrmE-Era-EngA-EngB-Septin-like GTPase superfamily. Septin GTPase family. Septins polymerize into heterooligomeric protein complexes that form filaments, and associate with cellular membranes, actin filaments and microtubules. GTPase activity is required for filament formation. Filaments are assembled from asymmetrical heterotrimers, composed of SEPTIN2, SEPTIN6 and SEPTIN7 that associate head-to-head to form a hexameric unit. Within the trimer, directly interacts with SEPTIN2 and SEPTIN7. Also interacts with SEPTIN9 and SEPTIN12. Interaction with SEPTIN12 alters filament structure. Component of a septin core octameric complex consisting of SEPTIN12, SEPTIN7, SEPTIN6 and SEPTIN2 or SEPTIN4 in the order 12-7-6-2-2-6-7-12 or 12-7-6-4-4-6-7-12 and located in the sperm annulus. Interacts with SOCS7. Interacts with HNRNPA1. Expressed in the cerebral cortex (at protein level). Associated with synaptic vesicles in various brain regions, including glomeruli of the olfactory bulb (at protein level).

The protein resides in the cytoplasm. It is found in the cytoskeleton. Its subcellular location is the spindle. The protein localises to the chromosome. It localises to the centromere. The protein resides in the kinetochore. It is found in the cleavage furrow. Its subcellular location is the midbody. The protein localises to the cell projection. It localises to the cilium. The protein resides in the flagellum. Its function is as follows. Filament-forming cytoskeletal GTPase. Required for normal organization of the actin cytoskeleton. Involved in cytokinesis. Forms a filamentous structure with SEPTIN12, SEPTIN6, SEPTIN2 and probably SEPTIN4 at the sperm annulus which is required for the structural integrity and motility of the sperm tail during postmeiotic differentiation. The chain is Septin-6 from Mus musculus (Mouse).